We begin with the raw amino-acid sequence, 376 residues long: Erythronate-4-phosphate dehydrogenase (376 aa).

Residues Ser-45 and Thr-67 each coordinate substrate. Residues Asp-147, Ala-209–Arg-211, and Asp-235 contribute to the NAD(+) site. Arg-211 is a catalytic residue. Glu-240 is a catalytic residue. The active-site Proton donor is the His-257. Gly-260 contributes to the NAD(+) binding site. Tyr-261 is a substrate binding site.

The protein belongs to the D-isomer specific 2-hydroxyacid dehydrogenase family. PdxB subfamily. Homodimer.

Its subcellular location is the cytoplasm. The enzyme catalyses 4-phospho-D-erythronate + NAD(+) = (R)-3-hydroxy-2-oxo-4-phosphooxybutanoate + NADH + H(+). The protein operates within cofactor biosynthesis; pyridoxine 5'-phosphate biosynthesis; pyridoxine 5'-phosphate from D-erythrose 4-phosphate: step 2/5. Its function is as follows. Catalyzes the oxidation of erythronate-4-phosphate to 3-hydroxy-2-oxo-4-phosphonooxybutanoate. The protein is Erythronate-4-phosphate dehydrogenase of Aeromonas hydrophila subsp. hydrophila (strain ATCC 7966 / DSM 30187 / BCRC 13018 / CCUG 14551 / JCM 1027 / KCTC 2358 / NCIMB 9240 / NCTC 8049).